The sequence spans 289 residues: SNF1-related protein kinase regulatory subunit beta-2 (289 aa).

Residues 1–10 (MGNVNAREEA) show a composition bias toward basic and acidic residues. Residues 1–59 (MGNVNAREEANSNNASAVEDEDAEICSREAMSAASDGNHVAPPELMGQSPPHSPRATQS) are disordered. G2 is lipidated: N-myristoyl glycine. Residues 103–180 (PTMITWCHGG…AGNTFNILDL (78 aa)) form a kinase-interacting sequence (KIS) region. The association with SNF1 complex (ASC) stretch occupies residues 217–289 (EPPVVPPHLQ…TVVLYKSLQR (73 aa)).

This sequence belongs to the 5'-AMP-activated protein kinase beta subunit family. As to quaternary structure, subunit of a probable heterotrimeric complex consisting of an alpha catalytic (KIN10 or KIN11) subunit, and a beta (KINB) and a gamma (KING or SNF4) non-catalytic regulatory subunits. Interacts with SNF4. Interacts with FLZ1, FLZ2, FLZ8, FLZ9, FLZ10, FLZ12, FLZ13 and FLZ14. In terms of processing, sumoylated. As to expression, expressed in leaves, stems, roots, flower buds and flowers. Not detectable in siliques.

It localises to the cell membrane. In terms of biological role, regulatory subunit of the probable trimeric SNF1-related protein kinase (SnRK) complex, which may play a role in a signal transduction cascade regulating gene expression and carbohydrate metabolism in higher plants. The SnRK complex may also be involved in the regulation of fatty acid synthesis by phosphorylation of acetyl-CoA carboxylase and in assimilation of nitrogen by phosphorylating nitrate reductase. This Arabidopsis thaliana (Mouse-ear cress) protein is SNF1-related protein kinase regulatory subunit beta-2 (KINB2).